Reading from the N-terminus, the 335-residue chain is Holliday junction branch migration complex subunit RuvB (335 aa).

The tract at residues 2 to 184 (ADERIVSAEN…FGIVEHMAYY (183 aa)) is large ATPase domain (RuvB-L). Residues Leu23, Arg24, Gly65, Lys68, Thr69, Thr70, 131–133 (EDF), Arg174, Tyr184, and Arg221 each bind ATP. A Mg(2+)-binding site is contributed by Thr69. Residues 185–255 (TEADLMDIVQ…IADHALSQLQ (71 aa)) form a small ATPAse domain (RuvB-S) region. The head domain (RuvB-H) stretch occupies residues 258 to 335 (IRGLDGVDRK…AHLGMPYPEK (78 aa)). DNA-binding residues include Arg313 and Arg318.

The protein belongs to the RuvB family. Homohexamer. Forms an RuvA(8)-RuvB(12)-Holliday junction (HJ) complex. HJ DNA is sandwiched between 2 RuvA tetramers; dsDNA enters through RuvA and exits via RuvB. An RuvB hexamer assembles on each DNA strand where it exits the tetramer. Each RuvB hexamer is contacted by two RuvA subunits (via domain III) on 2 adjacent RuvB subunits; this complex drives branch migration. In the full resolvosome a probable DNA-RuvA(4)-RuvB(12)-RuvC(2) complex forms which resolves the HJ.

Its subcellular location is the cytoplasm. The catalysed reaction is ATP + H2O = ADP + phosphate + H(+). In terms of biological role, the RuvA-RuvB-RuvC complex processes Holliday junction (HJ) DNA during genetic recombination and DNA repair, while the RuvA-RuvB complex plays an important role in the rescue of blocked DNA replication forks via replication fork reversal (RFR). RuvA specifically binds to HJ cruciform DNA, conferring on it an open structure. The RuvB hexamer acts as an ATP-dependent pump, pulling dsDNA into and through the RuvAB complex. RuvB forms 2 homohexamers on either side of HJ DNA bound by 1 or 2 RuvA tetramers; 4 subunits per hexamer contact DNA at a time. Coordinated motions by a converter formed by DNA-disengaged RuvB subunits stimulates ATP hydrolysis and nucleotide exchange. Immobilization of the converter enables RuvB to convert the ATP-contained energy into a lever motion, pulling 2 nucleotides of DNA out of the RuvA tetramer per ATP hydrolyzed, thus driving DNA branch migration. The RuvB motors rotate together with the DNA substrate, which together with the progressing nucleotide cycle form the mechanistic basis for DNA recombination by continuous HJ branch migration. Branch migration allows RuvC to scan DNA until it finds its consensus sequence, where it cleaves and resolves cruciform DNA. In Latilactobacillus sakei subsp. sakei (strain 23K) (Lactobacillus sakei subsp. sakei), this protein is Holliday junction branch migration complex subunit RuvB.